We begin with the raw amino-acid sequence, 107 residues long: Neuroparsin-A (107 aa).

An N-terminal signal peptide occupies residues 1-22; that stretch reads MKATAALVAATLLLAVTLFHRA. Residues 23 to 24 constitute a propeptide that is removed on maturation; it reads ER.

Homodimer; disulfide-linked.

In terms of biological role, neurosparins are multifunctional neurohormones: they inhibit the effects of juvenile hormone, stimulate fluid reabsorption of isolated recta and induces an increase in hemolymph lipid and trehalose levels. The protein is Neuroparsin-A of Locusta migratoria (Migratory locust).